We begin with the raw amino-acid sequence, 508 residues long: Photosystem II CP47 reaction center protein (508 aa).

6 helical membrane passes run 21 to 36, 101 to 115, 140 to 156, 203 to 218, 237 to 252, and 457 to 472; these read SVHI…WAGS, IVFS…IWHW, GIHL…FGAF, IAAG…FHLS, VLSS…AFVV, and SFAL…HGAR.

Belongs to the PsbB/PsbC family. PsbB subfamily. As to quaternary structure, PSII is composed of 1 copy each of membrane proteins PsbA, PsbB, PsbC, PsbD, PsbE, PsbF, PsbH, PsbI, PsbJ, PsbK, PsbL, PsbM, PsbT, PsbX, PsbY, PsbZ, Psb30/Ycf12, at least 3 peripheral proteins of the oxygen-evolving complex and a large number of cofactors. It forms dimeric complexes. Requires Binds multiple chlorophylls. PSII binds additional chlorophylls, carotenoids and specific lipids. as cofactor.

The protein resides in the plastid. The protein localises to the chloroplast thylakoid membrane. Its function is as follows. One of the components of the core complex of photosystem II (PSII). It binds chlorophyll and helps catalyze the primary light-induced photochemical processes of PSII. PSII is a light-driven water:plastoquinone oxidoreductase, using light energy to abstract electrons from H(2)O, generating O(2) and a proton gradient subsequently used for ATP formation. The protein is Photosystem II CP47 reaction center protein of Illicium oligandrum (Star anise).